Reading from the N-terminus, the 170-residue chain is Urease accessory protein UreE (170 aa).

Residues 144–170 are disordered; sequence GGHSHDDHDHHHGHHEHDHEHHHHHHD. Positions 146-162 are enriched in basic and acidic residues; the sequence is HSHDDHDHHHGHHEHDH.

Belongs to the UreE family.

The protein resides in the cytoplasm. Involved in urease metallocenter assembly. Binds nickel. Probably functions as a nickel donor during metallocenter assembly. The chain is Urease accessory protein UreE from Brucella anthropi (strain ATCC 49188 / DSM 6882 / CCUG 24695 / JCM 21032 / LMG 3331 / NBRC 15819 / NCTC 12168 / Alc 37) (Ochrobactrum anthropi).